Consider the following 188-residue polypeptide: Putative manganese efflux pump MntP (188 aa).

6 helical membrane-spanning segments follow: residues 8-28 (CLGL…GFVI), 39-59 (IALF…LTGL), 68-88 (IDHW…IYEA), 106-126 (LLAL…GLSL), 131-151 (ILLP…IGVF), and 164-184 (IEII…IEDL).

The protein belongs to the MntP (TC 9.B.29) family.

The protein resides in the cell inner membrane. In terms of biological role, probably functions as a manganese efflux pump. This chain is Putative manganese efflux pump MntP, found in Crocosphaera subtropica (strain ATCC 51142 / BH68) (Cyanothece sp. (strain ATCC 51142)).